A 239-amino-acid polypeptide reads, in one-letter code: NAD-dependent protein deacylase (239 aa).

One can recognise a Deacetylase sirtuin-type domain in the interval methionine 1–lysine 234. NAD(+)-binding positions include glycine 11–tryptophan 30 and glutamine 89–aspartate 92. Catalysis depends on histidine 107, which acts as the Proton acceptor. Zn(2+)-binding residues include cysteine 115, cysteine 118, cysteine 136, and cysteine 139. Residues glycine 176 to serine 178, asparagine 202 to glutamate 204, and alanine 220 each bind NAD(+).

The protein belongs to the sirtuin family. Class III subfamily. Requires Zn(2+) as cofactor.

The protein resides in the cytoplasm. It carries out the reaction N(6)-acetyl-L-lysyl-[protein] + NAD(+) + H2O = 2''-O-acetyl-ADP-D-ribose + nicotinamide + L-lysyl-[protein]. In terms of biological role, NAD-dependent protein deacetylase which modulates the activities of several proteins which are inactive in their acetylated form. The protein is NAD-dependent protein deacylase of Aquifex aeolicus (strain VF5).